We begin with the raw amino-acid sequence, 391 residues long: Probable chaperonin-like protein PrmG (391 aa).

The segment at 153–191 (TTRWSVRSSPPPSNTSARTASSPPRRATHSGCRSRSSTA) is disordered. A compositionally biased stretch (polar residues) spans 154 to 174 (TRWSVRSSPPPSNTSARTASS).

Belongs to the chaperonin (HSP60) family.

Probably plays an essential role in the productive folding of PrmA and PrmC, and thus in the formation of the active PrmABCD complex. The protein is Probable chaperonin-like protein PrmG of Gordonia sp. (strain TY-5).